The sequence spans 116 residues: Large ribosomal subunit protein bL19 (116 aa).

This sequence belongs to the bacterial ribosomal protein bL19 family.

In terms of biological role, this protein is located at the 30S-50S ribosomal subunit interface and may play a role in the structure and function of the aminoacyl-tRNA binding site. The protein is Large ribosomal subunit protein bL19 of Shewanella loihica (strain ATCC BAA-1088 / PV-4).